The following is a 475-amino-acid chain: Dihydrolipoyl dehydrogenase (475 aa).

Residues 36 to 45 (ERYNTLGGVC), Lys54, and Gly117 contribute to the FAD site. A disulfide bridge connects residues Cys45 and Cys50. NAD(+) is bound by residues 182–186 (GGGII), Glu205, Val238, and 270–273 (AIGR). The FAD site is built by Asp313 and Ala321. The active-site Proton acceptor is the His445.

It belongs to the class-I pyridine nucleotide-disulfide oxidoreductase family. FAD serves as cofactor.

The protein localises to the cytoplasm. It catalyses the reaction N(6)-[(R)-dihydrolipoyl]-L-lysyl-[protein] + NAD(+) = N(6)-[(R)-lipoyl]-L-lysyl-[protein] + NADH + H(+). Functionally, the branched-chain alpha-keto dehydrogenase complex catalyzes the overall conversion of alpha-keto acids to acyl-CoA and CO(2). It contains multiple copies of 3 enzymatic components: branched-chain alpha-keto acid decarboxylase (E1), lipoamide acyltransferase (E2) and lipoamide dehydrogenase (E3). This Vibrio cholerae serotype O1 (strain ATCC 39315 / El Tor Inaba N16961) protein is Dihydrolipoyl dehydrogenase (lpd).